A 145-amino-acid chain; its full sequence is 3-hydroxyacyl-[acyl-carrier-protein] dehydratase FabZ (145 aa).

Residue His-49 is part of the active site.

This sequence belongs to the thioester dehydratase family. FabZ subfamily.

It localises to the cytoplasm. It catalyses the reaction a (3R)-hydroxyacyl-[ACP] = a (2E)-enoyl-[ACP] + H2O. In terms of biological role, involved in unsaturated fatty acids biosynthesis. Catalyzes the dehydration of short chain beta-hydroxyacyl-ACPs and long chain saturated and unsaturated beta-hydroxyacyl-ACPs. The chain is 3-hydroxyacyl-[acyl-carrier-protein] dehydratase FabZ from Anaplasma phagocytophilum (strain HZ).